A 38-amino-acid polypeptide reads, in one-letter code: Kappa-theraphotoxin-Hm2a (38 aa).

Disulfide bonds link cysteine 2–cysteine 16, cysteine 9–cysteine 21, and cysteine 15–cysteine 32. Phenylalanine 38 bears the Phenylalanine amide mark.

It belongs to the neurotoxin 10 (Hwtx-1) family. 13 (Hntx-13) subfamily. Expressed by the venom gland.

It is found in the secreted. Functionally, inhibitor of voltage-gated potassium channels. It specifically inhibits Kv2.1/KCNB1 channels. The sequence is that of Kappa-theraphotoxin-Hm2a from Heteroscodra maculata (Togo starburst tarantula).